Consider the following 130-residue polypeptide: UPF0102 protein Cthe_0758 (130 aa).

Belongs to the UPF0102 family.

This Acetivibrio thermocellus (strain ATCC 27405 / DSM 1237 / JCM 9322 / NBRC 103400 / NCIMB 10682 / NRRL B-4536 / VPI 7372) (Clostridium thermocellum) protein is UPF0102 protein Cthe_0758.